The primary structure comprises 60 residues: Cytochrome c oxidase assembly protein COX14 homolog (60 aa).

The helical transmembrane segment at 10-32 (VGYRLFSGSMMLLTVYGGYLCVV) threads the bilayer.

Its subcellular location is the mitochondrion membrane. Functionally, plays a role in the assembly or stability of the cytochrome c oxidase complex (COX). The polypeptide is Cytochrome c oxidase assembly protein COX14 homolog (Danio rerio (Zebrafish)).